A 220-amino-acid chain; its full sequence is Fructose-6-phosphate aldolase 1 (220 aa).

Residue Lys85 is the Schiff-base intermediate with substrate of the active site.

It belongs to the transaldolase family. Type 3A subfamily. As to quaternary structure, homodecamer. Five subunits are arranged as a pentamer, and two ring-like pentamers pack like a donut to form the decamer.

The protein resides in the cytoplasm. The enzyme catalyses beta-D-fructose 6-phosphate = dihydroxyacetone + D-glyceraldehyde 3-phosphate. Inhibited by glycerol, inorganic phosphate and arabinose 5-phosphate. Catalyzes the reversible formation of fructose 6-phosphate from dihydroxyacetone (DHA) and D-glyceraldehyde 3-phosphate via an aldolization reaction. Can utilize several aldehydes as acceptor compounds in vitro, and hydroxyacetone (HA) or 1-hydroxy-butan-2-one as alternative donor substrate. Is also able to catalyze the direct stereoselective self-aldol addition of glycolaldehyde to furnish D-(-)-threose, and cross-aldol reactions of glycolaldehyde to other aldehyde acceptors. Is not able to cleave fructose, fructose 1-phosphate, glucose 6-phosphate, sedoheptulose 1,7-bisphosphate, xylulose 5-phosphate, ribulose 5-phosphate, and fructose 1,6-bisphosphate; cannot use dihydroxyacetone phosphate as donor compound nor D-glyceraldehyde as acceptor. Does not display transaldolase activity. The protein is Fructose-6-phosphate aldolase 1 (fsaA) of Escherichia coli (strain K12).